The chain runs to 225 residues: Immune-associated nucleotide-binding protein 1 (225 aa).

The AIG1-type G domain occupies 6–214; it reads CPVTNLLLLG…YTENMHRKIK (209 aa). Positions 15 to 22 are G1; that stretch reads GRSENGKS. GTP is bound at residue 15–23; sequence GRSENGKSS. The interval 42–46 is G2; the sequence is DMDQR. The interval 64 to 67 is G3; the sequence is DTPG. The interval 134 to 137 is G4; that stretch reads TGGD. A G5 region spans residues 173 to 175; the sequence is NNK. Asn174 contributes to the GTP binding site.

Belongs to the TRAFAC class TrmE-Era-EngA-EngB-Septin-like GTPase superfamily. AIG1/Toc34/Toc159-like paraseptin GTPase family. IAN subfamily. As to expression, mostly expressed in pollen.

The chain is Immune-associated nucleotide-binding protein 1 from Arabidopsis thaliana (Mouse-ear cress).